Reading from the N-terminus, the 265-residue chain is 3-methyl-2-oxobutanoate hydroxymethyltransferase (265 aa).

Mg(2+) contacts are provided by D46 and D85. Residues 46–47 (DS), D85, and K114 contribute to the 3-methyl-2-oxobutanoate site. E116 lines the Mg(2+) pocket. E183 acts as the Proton acceptor in catalysis.

It belongs to the PanB family. Homodecamer; pentamer of dimers. Requires Mg(2+) as cofactor.

Its subcellular location is the cytoplasm. The catalysed reaction is 3-methyl-2-oxobutanoate + (6R)-5,10-methylene-5,6,7,8-tetrahydrofolate + H2O = 2-dehydropantoate + (6S)-5,6,7,8-tetrahydrofolate. Its pathway is cofactor biosynthesis; coenzyme A biosynthesis. In terms of biological role, catalyzes the reversible reaction in which hydroxymethyl group from 5,10-methylenetetrahydrofolate is transferred onto alpha-ketoisovalerate to form ketopantoate. This is 3-methyl-2-oxobutanoate hydroxymethyltransferase from Caldivirga maquilingensis (strain ATCC 700844 / DSM 13496 / JCM 10307 / IC-167).